Reading from the N-terminus, the 159-residue chain is Small ribosomal subunit protein uS7 (159 aa).

This sequence belongs to the universal ribosomal protein uS7 family. In terms of assembly, part of the 30S ribosomal subunit. Contacts proteins S9 and S11.

Functionally, one of the primary rRNA binding proteins, it binds directly to 16S rRNA where it nucleates assembly of the head domain of the 30S subunit. Is located at the subunit interface close to the decoding center, probably blocks exit of the E-site tRNA. This is Small ribosomal subunit protein uS7 from Wolbachia sp. subsp. Brugia malayi (strain TRS).